A 435-amino-acid chain; its full sequence is Serine/threonine-protein kinase 40 (435 aa).

Residues 1–10 (MKRRASDRGA) show a composition bias toward basic and acidic residues. A disordered region spans residues 1 to 25 (MKRRASDRGAGETSARAKALGSGIS). Residues 35–331 (FILGPRLGNS…ADVLEALSAI (297 aa)) enclose the Protein kinase domain. ATP is bound by residues 41 to 49 (LGNSPVPSI) and Lys-66. Arg-196 (proton acceptor) is an active-site residue.

The protein belongs to the protein kinase superfamily. CAMK Ser/Thr protein kinase family. In terms of tissue distribution, strongly expressed in heart, brain, placenta, lung, skeletal muscle, kidney, spleen, thymus, prostate, liver, pancreas, testis, ovary, small intestine, colon and peripheral blood leukocytes.

Its subcellular location is the nucleus. It localises to the cytoplasm. It carries out the reaction L-seryl-[protein] + ATP = O-phospho-L-seryl-[protein] + ADP + H(+). The enzyme catalyses L-threonyl-[protein] + ATP = O-phospho-L-threonyl-[protein] + ADP + H(+). May be a negative regulator of NF-kappa-B and p53-mediated gene transcription. This Homo sapiens (Human) protein is Serine/threonine-protein kinase 40 (STK40).